Here is a 153-residue protein sequence, read N- to C-terminus: Cytochrome c-type biogenesis protein CcmE (153 aa).

At 1–8 (MATRRGRR) the chain is on the cytoplasmic side. A helical; Signal-anchor for type II membrane protein membrane pass occupies residues 9 to 29 (ALLIAGGVGLLALAAALVLNA). The Periplasmic segment spans residues 30-153 (LRSNLVFFFS…PSATLQTEAR (124 aa)). Heme is bound by residues histidine 124 and tyrosine 128.

This sequence belongs to the CcmE/CycJ family.

It is found in the cell inner membrane. Its function is as follows. Heme chaperone required for the biogenesis of c-type cytochromes. Transiently binds heme delivered by CcmC and transfers the heme to apo-cytochromes in a process facilitated by CcmF and CcmH. This Bordetella bronchiseptica (strain ATCC BAA-588 / NCTC 13252 / RB50) (Alcaligenes bronchisepticus) protein is Cytochrome c-type biogenesis protein CcmE.